The sequence spans 246 residues: Adenosine 5'-phosphosulfate reductase (246 aa).

[4Fe-4S] cluster-binding residues include C131, C132, C214, and C217. C242 serves as the catalytic Nucleophile; cysteine thiosulfonate intermediate.

It belongs to the PAPS reductase family. CysH subfamily. It depends on [4Fe-4S] cluster as a cofactor.

It localises to the cytoplasm. It catalyses the reaction [thioredoxin]-disulfide + sulfite + AMP + 2 H(+) = adenosine 5'-phosphosulfate + [thioredoxin]-dithiol. It functions in the pathway sulfur metabolism; hydrogen sulfide biosynthesis; sulfite from sulfate. Functionally, catalyzes the formation of sulfite from adenosine 5'-phosphosulfate (APS) using thioredoxin as an electron donor. The sequence is that of Adenosine 5'-phosphosulfate reductase from Neisseria meningitidis serogroup B (strain ATCC BAA-335 / MC58).